Consider the following 517-residue polypeptide: Cytochrome P450 CYP72A616 (517 aa).

The helical transmembrane segment at 5 to 25 (VLGALAALLAAAAAWVMRAAA) threads the bilayer. C465 lines the heme pocket.

It belongs to the cytochrome P450 family. In terms of tissue distribution, mainly expressed in leaves and, at low levels, in roots, fruits and stems.

It localises to the membrane. It functions in the pathway steroid metabolism; cholesterol metabolism. Functionally, involved in the biosynthesis of spiroketal steroid and saponin natural products from cholesterol such as diosgenin and analogs (e.g. furostanol and spirostanol), plant defense compounds used as main precursors for the industrial production of steroid hormones. During the 5,6-spiroketalization of cholesterol, may catalyze the 27-monohydroxylation of furostanol-type steroid to an intermediate product that undergoes a stereospecific formation of the terminal heterocycle to yield diosgenin. This chain is Cytochrome P450 CYP72A616, found in Paris polyphylla (Daiswa polyphylla).